A 472-amino-acid chain; its full sequence is RNA pseudouridine synthase 6, chloroplastic (472 aa).

Residues 1–66 (MASPALTGGY…TDSQNQTTLS (66 aa)) constitute a chloroplast transit peptide. The S4 RNA-binding domain occupies 101–208 (VLVSEFISKQ…SPRCYEIDWK (108 aa)). Residue aspartate 261 is part of the active site.

The protein belongs to the pseudouridine synthase RluA family.

The protein localises to the plastid. It localises to the chloroplast. It carries out the reaction a uridine in RNA = a pseudouridine in RNA. The protein is RNA pseudouridine synthase 6, chloroplastic of Arabidopsis thaliana (Mouse-ear cress).